A 251-amino-acid chain; its full sequence is D-aminoacyl-tRNA deacylase (251 aa).

This sequence belongs to the DtdA deacylase family. Monomer. Requires Zn(2+) as cofactor.

It catalyses the reaction a D-aminoacyl-tRNA + H2O = a tRNA + a D-alpha-amino acid + H(+). It carries out the reaction glycyl-tRNA(Ala) + H2O = tRNA(Ala) + glycine + H(+). In terms of biological role, D-aminoacyl-tRNA deacylase with broad substrate specificity. By recycling D-aminoacyl-tRNA to D-amino acids and free tRNA molecules, this enzyme counteracts the toxicity associated with the formation of D-aminoacyl-tRNA entities in vivo. In Pyrobaculum aerophilum (strain ATCC 51768 / DSM 7523 / JCM 9630 / CIP 104966 / NBRC 100827 / IM2), this protein is D-aminoacyl-tRNA deacylase.